The following is a 304-amino-acid chain: MATASPHEIAHKLGSGLLSFPVTHFKDDHSFDEAAYRENIGWLGQFDASGLFAAGGTGEFFSLTPPEVEQVVRAAVQEAPDGLPVIAPAGYGTSTAVQMARSAESVGAHGILLLPPYLTEASQDGLVAHVKEVCAATTLGVTIYSRANAVYTEAAVAELADSCPNLVGFKDGVGNIEQMTRIYASLGDRLTYIGGLPTAEMFALPYLALGVTTYSSAIYNFVPKFAIDFYNALRSGDNAFVINALNEFVIPYCNLRNKKQGYAVSIIKAGMTVIDRPAGPVRAPLTDLDAVELAELADLIKKVS.

The protein belongs to the DapA family.

It carries out the reaction 5-dehydro-4-deoxy-D-glucarate + H(+) = 2,5-dioxopentanoate + CO2 + H2O. Its pathway is carbohydrate acid metabolism; D-glucarate degradation; 2,5-dioxopentanoate from D-glucarate: step 2/2. In Rhodococcus jostii (strain RHA1), this protein is Probable 5-dehydro-4-deoxyglucarate dehydratase.